Here is a 317-residue protein sequence, read N- to C-terminus: Melanocyte-stimulating hormone receptor (317 aa).

The Extracellular segment spans residues 1-37 (MPMQGAQRRLLGSLNSIPTATPNLGLAANHTGAPCLE). The N-linked (GlcNAc...) asparagine glycan is linked to N29. Residues 38–63 (VSIPDWLFLSLGLVSLVQNVLVVAAI) form a helical membrane-spanning segment. The Cytoplasmic segment spans residues 64-72 (AKNRNLHSP). Residues 73–93 (MYCFICCLALSDLLVSGSNML) form a helical membrane-spanning segment. The Extracellular portion of the chain corresponds to 94-118 (ETAVILMLEAGALATRASVVQQLQN). The chain crosses the membrane as a helical span at residues 119 to 140 (TIDVLTCSSMLCSLCFLGAIAL). Over 141–163 (DRYVSIFYALRYHSIVTLPRARR) the chain is Cytoplasmic. Residues 164–183 (AIAATWVASVLSSTLFIAYC) form a helical membrane-spanning segment. Over 184-191 (DHAAVLLC) the chain is Extracellular. Residues 192 to 211 (LVVFFLAMLVLMAVLYVHML) form a helical membrane-spanning segment. The Cytoplasmic portion of the chain corresponds to 212–240 (ARACQHAQGITRLHKRQLPAHQGFGLRGA). A helical membrane pass occupies residues 241-266 (ATLTILLGIFFLCWGPFFLHLMLVVL). Topologically, residues 267–279 (CPQHLTCSCIFKN) are extracellular. A helical membrane pass occupies residues 280 to 300 (FKVFLTLIICNTIIDPLIYAF). Over 301–317 (RSQELCRTLKEVLLCSW) the chain is Cytoplasmic. A lipid anchor (S-palmitoyl cysteine) is attached at C315.

Belongs to the G-protein coupled receptor 1 family. As to quaternary structure, interacts with MGRN1, but does not undergo MGRN1-mediated ubiquitination; this interaction competes with GNAS-binding and thus inhibits agonist-induced cAMP production. Interacts with OPN3; the interaction results in a decrease in MC1R-mediated cAMP signaling and ultimately a decrease in melanin production in melanocytes.

It localises to the cell membrane. Receptor for MSH (alpha, beta and gamma) and ACTH. The activity of this receptor is mediated by G proteins which activate adenylate cyclase. Mediates melanogenesis, the production of eumelanin (black/brown) and phaeomelanin (red/yellow), via regulation of cAMP signaling in melanocytes. This is Melanocyte-stimulating hormone receptor (MC1R) from Alouatta seniculus (Red howler monkey).